Reading from the N-terminus, the 157-residue chain is Transcription factor HES-2 (157 aa).

Residues 13-70 form the bHLH domain; that stretch reads LRKSLKPLLEKRRRARINESLSQLKGLVLPLLGAETSRYSKLEKADILEMTVRFLREQ. The region spanning 86-119 is the Orange domain; sequence YLEGYRACLARLARVLPACSVLEPAVSARLLEHL. The interval 124-157 is disordered; that stretch reads VSGGPPSLTPASASAPAPSPPVPPPSSLGLWRPW. Residues 125–139 show a composition bias toward low complexity; it reads SGGPPSLTPASASAP. A compositionally biased stretch (pro residues) spans 140-149; that stretch reads APSPPVPPPS. Positions 154–157 match the WRPW motif motif; the sequence is WRPW.

In terms of assembly, transcription repression requires formation of a complex with a corepressor protein of the Groucho/TLE family.

It is found in the nucleus. Functionally, transcriptional repressor of genes that require a bHLH protein for their transcription. In Rattus norvegicus (Rat), this protein is Transcription factor HES-2 (Hes2).